The primary structure comprises 850 residues: Lon protease (850 aa).

The 195-residue stretch at 38–232 folds into the Lon N-terminal domain; it reads LPVLPLRDVV…LLVGLVDGEI (195 aa). 384–391 is an ATP binding site; the sequence is GPPGVGKT. Residues 634-815 enclose the Lon proteolytic domain; the sequence is ENEIGLVTGL…DEVLDLALER (182 aa). Active-site residues include S721 and K764. The interval 819–850 is disordered; sequence PKKAGKEKARKTAPRVAVRGKSRSTPGTRVKH. The span at 821 to 840 shows a compositional bias: basic residues; that stretch reads KAGKEKARKTAPRVAVRGKS. Residues 841–850 are compositionally biased toward polar residues; that stretch reads RSTPGTRVKH.

Belongs to the peptidase S16 family. Homohexamer. Organized in a ring with a central cavity.

The protein localises to the cytoplasm. It catalyses the reaction Hydrolysis of proteins in presence of ATP.. ATP-dependent serine protease that mediates the selective degradation of mutant and abnormal proteins as well as certain short-lived regulatory proteins. Required for cellular homeostasis and for survival from DNA damage and developmental changes induced by stress. Degrades polypeptides processively to yield small peptide fragments that are 5 to 10 amino acids long. Binds to DNA in a double-stranded, site-specific manner. The protein is Lon protease of Xanthomonas oryzae pv. oryzae (strain KACC10331 / KXO85).